Reading from the N-terminus, the 270-residue chain is Tryptophan synthase alpha chain (270 aa).

Catalysis depends on proton acceptor residues Glu49 and Asp60.

This sequence belongs to the TrpA family. In terms of assembly, tetramer of two alpha and two beta chains.

The catalysed reaction is (1S,2R)-1-C-(indol-3-yl)glycerol 3-phosphate + L-serine = D-glyceraldehyde 3-phosphate + L-tryptophan + H2O. Its pathway is amino-acid biosynthesis; L-tryptophan biosynthesis; L-tryptophan from chorismate: step 5/5. The alpha subunit is responsible for the aldol cleavage of indoleglycerol phosphate to indole and glyceraldehyde 3-phosphate. The chain is Tryptophan synthase alpha chain from Marinobacter nauticus (strain ATCC 700491 / DSM 11845 / VT8) (Marinobacter aquaeolei).